Consider the following 891-residue polypeptide: Tubulin polyglutamylase TTLL6 (891 aa).

Disordered regions lie at residues 1 to 25 (MGAL…SSPA) and 44 to 106 (SQAR…KRKK). A compositionally biased stretch (basic and acidic residues) spans 63-76 (SEEKGDSSKEDPKE). The segment covering 88-99 (GAQNGLQNAQQQ) has biased composition (low complexity). A TTL domain is found at 106–449 (KKRLVINLSS…ESCDKKKVLE (344 aa)). ATP contacts are provided by residues Lys223, 229–230 (QG), 251–254 (QLYI), and 264–266 (KFD). Gln229 serves as a coordination point for a protein. An L-glutamate-binding site is contributed by Arg290. 312-313 (TN) serves as a coordination point for ATP. L-glutamate contacts are provided by Tyr314, Ser315, and Lys332. Mg(2+) is bound by residues Asp395, Glu408, and Asn410. An a protein-binding site is contributed by His411. Residues 420 to 499 (RLDKEVKDGL…CGGFRLIYPS (80 aa)) form a c-MTBD region region. Lys426 contributes to the L-glutamate binding site. Disordered regions lie at residues 546–584 (QMKK…ATQA), 607–636 (GERK…LTSA), 687–711 (TTPE…TASS), and 800–820 (NNLS…DSSG). The span at 687-699 (TTPESTTQLSISP) shows a compositional bias: polar residues.

This sequence belongs to the tubulin--tyrosine ligase family. As to quaternary structure, found in a complex with CEP41. It depends on Mg(2+) as a cofactor.

Its subcellular location is the cytoplasm. It is found in the cytoskeleton. It localises to the cilium axoneme. The protein localises to the cilium basal body. It catalyses the reaction L-glutamyl-[protein] + L-glutamate + ATP = gamma-L-glutamyl-L-glutamyl-[protein] + ADP + phosphate + H(+). The catalysed reaction is (L-glutamyl)(n)-gamma-L-glutamyl-L-glutamyl-[protein] + L-glutamate + ATP = (L-glutamyl)(n+1)-gamma-L-glutamyl-L-glutamyl-[protein] + ADP + phosphate + H(+). Polyglutamylase which modifies both tubulin and non-tubulin proteins, generating alpha-linked polyglutamate side chains on the gamma-carboxyl group of specific glutamate residues of target proteins. Preferentially mediates ATP-dependent long polyglutamate chain elongation over the initiation step of the polyglutamylation reaction. Preferentially modifies the alpha-tubulin tail over a beta-tail. Promotes tubulin polyglutamylation which stimulates spastin/SPAST-mediated microtubule severing, thereby regulating microtubule functions. Mediates microtubule polyglutamylation in primary cilia axoneme, which is important for ciliary structural formation and motility. Mediates microtubule polyglutamylation in motile cilia, necessary for the regulation of ciliary coordinated beating. Polyglutamylates non-tubulin protein nucleotidyltransferase CGAS, leading to CGAS DNA-binding inhibition, thereby preventing antiviral defense response. This Homo sapiens (Human) protein is Tubulin polyglutamylase TTLL6.